Reading from the N-terminus, the 142-residue chain is MTVGARLRSKAESSLLRRGPRGRGRTEGDEEAAAILEHLEYADEAEAAAESGTSAADERGPGTRGARRVHFALLPERYEPLEEPAPSEQPRKRYRRKLKKYGKNVGKVIIKGCRYVVIGLQGFAAAYSAPFAVATSVVSFVR.

Disordered regions lie at residues 1 to 32 and 46 to 66; these read MTVG…DEEA and EAAA…TRGA. The helical transmembrane segment at 116-138 threads the bilayer; that stretch reads VVIGLQGFAAAYSAPFAVATSVV.

Its subcellular location is the membrane. Its function is as follows. Regulates drug efflux through modulation of ABCB1 localization and activity. This is Required for drug-induced death protein 1 from Homo sapiens (Human).